Here is a 62-residue protein sequence, read N- to C-terminus: Large ribosomal subunit protein bL28 (62 aa).

The tract at residues 1 to 22 is disordered; the sequence is MGKQCFVTGRKASTGNRRSHAL.

This sequence belongs to the bacterial ribosomal protein bL28 family.

This is Large ribosomal subunit protein bL28 from Staphylococcus aureus (strain N315).